The following is a 30-amino-acid chain: Trypsin inhibitor 7 (30 aa).

Cystine bridges form between cysteine 4–cysteine 21, cysteine 11–cysteine 23, and cysteine 17–cysteine 29.

The protein belongs to the protease inhibitor I7 (squash-type serine protease inhibitor) family.

The protein resides in the secreted. Its function is as follows. Strongly inhibits trypsin, weakly inhibits chymotrypsin. The chain is Trypsin inhibitor 7 from Cyclanthera pedata (Achocha).